A 530-amino-acid polypeptide reads, in one-letter code: UDP-glucuronosyltransferase 2B31 (530 aa).

An N-terminal signal peptide occupies residues 1–24 (MSMKWISVLLGLQLSCYFSSGSCG). Lys-136 is modified (N6-succinyllysine). Asn-316 carries an N-linked (GlcNAc...) asparagine glycan. Residues 495 to 515 (IGFLLACVATAIFVTTQCCLF) traverse the membrane as a helical segment.

It belongs to the UDP-glycosyltransferase family.

The protein resides in the microsome membrane. It localises to the endoplasmic reticulum membrane. It carries out the reaction glucuronate acceptor + UDP-alpha-D-glucuronate = acceptor beta-D-glucuronoside + UDP + H(+). Its function is as follows. UDPGTs are of major importance in the conjugation and subsequent elimination of potentially toxic xenobiotics and endogenous compounds. This isozyme has glucuronidating capacity on phenols, opioids, and carboxylic acid-containing drugs. In Canis lupus familiaris (Dog), this protein is UDP-glucuronosyltransferase 2B31 (UGT2B31).